The chain runs to 257 residues: Ditrans,polycis-undecaprenyl-diphosphate synthase ((2E,6E)-farnesyl-diphosphate specific) (257 aa).

Residue aspartate 24 is part of the active site. Mg(2+) is bound at residue aspartate 24. Substrate-binding positions include 25–28 (GNGR), tryptophan 29, arginine 37, histidine 41, and 69–71 (SSE). Asparagine 72 functions as the Proton acceptor in the catalytic mechanism. Substrate contacts are provided by residues tryptophan 73, arginine 75, arginine 192, and 198-200 (RIS). Residue glutamate 211 coordinates Mg(2+).

The protein belongs to the UPP synthase family. As to quaternary structure, homodimer. The cofactor is Mg(2+).

The catalysed reaction is 8 isopentenyl diphosphate + (2E,6E)-farnesyl diphosphate = di-trans,octa-cis-undecaprenyl diphosphate + 8 diphosphate. Its function is as follows. Catalyzes the sequential condensation of isopentenyl diphosphate (IPP) with (2E,6E)-farnesyl diphosphate (E,E-FPP) to yield (2Z,6Z,10Z,14Z,18Z,22Z,26Z,30Z,34E,38E)-undecaprenyl diphosphate (di-trans,octa-cis-UPP). UPP is the precursor of glycosyl carrier lipid in the biosynthesis of bacterial cell wall polysaccharide components such as peptidoglycan and lipopolysaccharide. This Aliivibrio fischeri (strain ATCC 700601 / ES114) (Vibrio fischeri) protein is Ditrans,polycis-undecaprenyl-diphosphate synthase ((2E,6E)-farnesyl-diphosphate specific).